Here is a 292-residue protein sequence, read N- to C-terminus: tRNA (adenine(9)-N1)-methyltransferase (292 aa).

The SAM-dependent MTase TRM10-type domain maps to 72–253 (TFRKGGKKVS…ISLQSKSDKI (182 aa)).

The protein belongs to the class IV-like SAM-binding methyltransferase superfamily. TRM10 family.

It is found in the cytoplasm. It carries out the reaction adenosine(9) in tRNA + S-adenosyl-L-methionine = N(1)-methyladenosine(9) in tRNA + S-adenosyl-L-homocysteine + H(+). Functionally, catalyzes the S-adenosyl-L-methionine-dependent formation of N(1)-methyladenine at position 9 (m1A9) in tRNA. The chain is tRNA (adenine(9)-N1)-methyltransferase from Sulfolobus acidocaldarius (strain ATCC 33909 / DSM 639 / JCM 8929 / NBRC 15157 / NCIMB 11770).